Reading from the N-terminus, the 445-residue chain is Phosphoglucosamine mutase (445 aa).

The active-site Phosphoserine intermediate is the Ser-102. 4 residues coordinate Mg(2+): Ser-102, Asp-241, Asp-243, and Asp-245. The residue at position 102 (Ser-102) is a Phosphoserine.

Belongs to the phosphohexose mutase family. Mg(2+) is required as a cofactor. Post-translationally, activated by phosphorylation.

The catalysed reaction is alpha-D-glucosamine 1-phosphate = D-glucosamine 6-phosphate. Its function is as follows. Catalyzes the conversion of glucosamine-6-phosphate to glucosamine-1-phosphate. This chain is Phosphoglucosamine mutase, found in Hahella chejuensis (strain KCTC 2396).